The chain runs to 106 residues: Nucleoid-associated protein Rpal_0620 (106 aa).

The protein belongs to the YbaB/EbfC family. Homodimer.

Its subcellular location is the cytoplasm. The protein localises to the nucleoid. Its function is as follows. Binds to DNA and alters its conformation. May be involved in regulation of gene expression, nucleoid organization and DNA protection. This is Nucleoid-associated protein Rpal_0620 from Rhodopseudomonas palustris (strain TIE-1).